Consider the following 92-residue polypeptide: PqqA binding protein (92 aa).

The protein belongs to the PqqD family. As to quaternary structure, monomer. Interacts with PqqE.

It functions in the pathway cofactor biosynthesis; pyrroloquinoline quinone biosynthesis. Functions as a PqqA binding protein and presents PqqA to PqqE, in the pyrroloquinoline quinone (PQQ) biosynthetic pathway. This Stutzerimonas stutzeri (strain A1501) (Pseudomonas stutzeri) protein is PqqA binding protein.